Consider the following 271-residue polypeptide: Formamidopyrimidine-DNA glycosylase (271 aa).

The active-site Schiff-base intermediate with DNA is the Pro2. Glu3 acts as the Proton donor in catalysis. Lys58 serves as the catalytic Proton donor; for beta-elimination activity. Positions 92, 111, and 152 each coordinate DNA. The FPG-type zinc-finger motif lies at 237 to 271 (YVYGKVQKPCRICNNIITLIRQNGRSTYFCNACQN). The Proton donor; for delta-elimination activity role is filled by Arg261.

The protein belongs to the FPG family. As to quaternary structure, monomer. Zn(2+) is required as a cofactor.

It carries out the reaction Hydrolysis of DNA containing ring-opened 7-methylguanine residues, releasing 2,6-diamino-4-hydroxy-5-(N-methyl)formamidopyrimidine.. It catalyses the reaction 2'-deoxyribonucleotide-(2'-deoxyribose 5'-phosphate)-2'-deoxyribonucleotide-DNA = a 3'-end 2'-deoxyribonucleotide-(2,3-dehydro-2,3-deoxyribose 5'-phosphate)-DNA + a 5'-end 5'-phospho-2'-deoxyribonucleoside-DNA + H(+). Involved in base excision repair of DNA damaged by oxidation or by mutagenic agents. Acts as a DNA glycosylase that recognizes and removes damaged bases. Has a preference for oxidized purines, such as 7,8-dihydro-8-oxoguanine (8-oxoG). Has AP (apurinic/apyrimidinic) lyase activity and introduces nicks in the DNA strand. Cleaves the DNA backbone by beta-delta elimination to generate a single-strand break at the site of the removed base with both 3'- and 5'-phosphates. The chain is Formamidopyrimidine-DNA glycosylase from Wolbachia pipientis subsp. Culex pipiens (strain wPip).